Reading from the N-terminus, the 294-residue chain is ADKIFEETKKIINAFIQRITYVEFLPEILNAETLKNNELNEGIYGYEEFTDPRISNVFSTAAFQFIHSLTPSSIEFDGTETPLMDLFNNQNFLFLDTEKVAVYMMSSAGEPMDRFFSKQLTDHYFQSGNISFDLVAQIIQRGRDHGLPSYNTFRRHCGLPRLPHFYAMEAANVLKAVYHNIDDVDVFVGGMVEIPLPGSLLGPTFSCLIARQFRDTKFGDSHWYESADPKKGFNEGQLKSIKAMSAAKILCDGFGLSLIPENPFRVTSPSNPMVVCADLPGLDFQPWFLLGNQI.

N-linked (GlcNAc...) asparagine glycosylation is present at Asn-129.

The protein belongs to the peroxidase family. Component of the acid-insoluble and acid-soluble organic matrix of calcified layers of the shell (at protein level).

It localises to the secreted. This is Peroxidase-like protein 3 from Lottia gigantea (Giant owl limpet).